The primary structure comprises 83 residues: uncharacterized protein (83 aa).

This is an uncharacterized protein from Treponema pallidum (strain Nichols).